The primary structure comprises 361 residues: Phosphoserine aminotransferase (361 aa).

Arginine 42 contacts L-glutamate. Pyridoxal 5'-phosphate-binding positions include 76–77 (AT), tryptophan 102, threonine 152, aspartate 172, and glutamine 195. An N6-(pyridoxal phosphate)lysine modification is found at lysine 196. Position 237–238 (237–238 (NT)) interacts with pyridoxal 5'-phosphate.

The protein belongs to the class-V pyridoxal-phosphate-dependent aminotransferase family. SerC subfamily. As to quaternary structure, homodimer. It depends on pyridoxal 5'-phosphate as a cofactor.

The protein localises to the cytoplasm. The catalysed reaction is O-phospho-L-serine + 2-oxoglutarate = 3-phosphooxypyruvate + L-glutamate. It catalyses the reaction 4-(phosphooxy)-L-threonine + 2-oxoglutarate = (R)-3-hydroxy-2-oxo-4-phosphooxybutanoate + L-glutamate. The protein operates within amino-acid biosynthesis; L-serine biosynthesis; L-serine from 3-phospho-D-glycerate: step 2/3. Its pathway is cofactor biosynthesis; pyridoxine 5'-phosphate biosynthesis; pyridoxine 5'-phosphate from D-erythrose 4-phosphate: step 3/5. Its function is as follows. Catalyzes the reversible conversion of 3-phosphohydroxypyruvate to phosphoserine and of 3-hydroxy-2-oxo-4-phosphonooxybutanoate to phosphohydroxythreonine. This Stenotrophomonas maltophilia (strain K279a) protein is Phosphoserine aminotransferase.